We begin with the raw amino-acid sequence, 61 residues long: Large ribosomal subunit protein bL32 (61 aa).

Residues 1-16 (MAVPKRKTSPSKRGMR) show a composition bias toward basic residues. Residues 1–39 (MAVPKRKTSPSKRGMRRSADALKAPTYIEDKNSGELRRP) form a disordered region. Residues 28–39 (IEDKNSGELRRP) show a composition bias toward basic and acidic residues.

This sequence belongs to the bacterial ribosomal protein bL32 family.

This is Large ribosomal subunit protein bL32 from Rhizobium meliloti (strain 1021) (Ensifer meliloti).